We begin with the raw amino-acid sequence, 285 residues long: Gap junction Cx32.2 protein (285 aa).

Residues Gly2–Thr19 lie on the Cytoplasmic side of the membrane. The helical transmembrane segment at Val20–Gly40 threads the bilayer. The Extracellular portion of the chain corresponds to Ala41 to Arg76. A helical membrane pass occupies residues Phe77–Ile99. The Cytoplasmic portion of the chain corresponds to Ile100–Lys148. The helical transmembrane segment at Ile149 to Phe171 threads the bilayer. Residues Pro172–Ile194 are Extracellular-facing. The helical transmembrane segment at Phe195–Leu217 threads the bilayer. At Ile218–His285 the chain is on the cytoplasmic side. The segment at Glu264–His285 is disordered. The segment covering Gly275 to His285 has biased composition (basic and acidic residues).

Belongs to the connexin family. Beta-type (group I) subfamily. In terms of assembly, a connexon is composed of a hexamer of connexins.

Its subcellular location is the cell membrane. It is found in the cell junction. The protein localises to the gap junction. Its function is as follows. One gap junction consists of a cluster of closely packed pairs of transmembrane channels, the connexons, through which materials of low MW diffuse from one cell to a neighboring cell. May be involved in ovarian follicular maturation. This chain is Gap junction Cx32.2 protein, found in Micropogonias undulatus (Atlantic croaker).